We begin with the raw amino-acid sequence, 307 residues long: Probable RuBisCO transcriptional regulator (307 aa).

Positions 5–62 (FTLQQLRIFKAIASEKSFTQAAEILFVSQPSLSKQIKTLENRLGILLLNRTGNKILLT) constitute an HTH lysR-type domain. The H-T-H motif DNA-binding region spans 22–41 (FTQAAEILFVSQPSLSKQIK).

Belongs to the LysR transcriptional regulatory family.

The protein localises to the plastid. It is found in the chloroplast. Its function is as follows. Trans-acting transcriptional regulator of RuBisCO genes (rbcL and rbcS) expression. The protein is Probable RuBisCO transcriptional regulator (rbcR-A) of Thalassiosira pseudonana (Marine diatom).